Reading from the N-terminus, the 506-residue chain is ATP synthase subunit alpha (506 aa).

169 to 176 (GDRGTGKT) contacts ATP.

Belongs to the ATPase alpha/beta chains family. F-type ATPases have 2 components, CF(1) - the catalytic core - and CF(0) - the membrane proton channel. CF(1) has five subunits: alpha(3), beta(3), gamma(1), delta(1), epsilon(1). CF(0) has three main subunits: a(1), b(2) and c(9-12). The alpha and beta chains form an alternating ring which encloses part of the gamma chain. CF(1) is attached to CF(0) by a central stalk formed by the gamma and epsilon chains, while a peripheral stalk is formed by the delta and b chains.

It localises to the cell membrane. The catalysed reaction is ATP + H2O + 4 H(+)(in) = ADP + phosphate + 5 H(+)(out). In terms of biological role, produces ATP from ADP in the presence of a proton gradient across the membrane. The alpha chain is a regulatory subunit. In Symbiobacterium thermophilum (strain DSM 24528 / JCM 14929 / IAM 14863 / T), this protein is ATP synthase subunit alpha.